The chain runs to 116 residues: Ribosome-binding factor A (116 aa).

This sequence belongs to the RbfA family. As to quaternary structure, monomer. Binds 30S ribosomal subunits, but not 50S ribosomal subunits or 70S ribosomes.

Its subcellular location is the cytoplasm. In terms of biological role, one of several proteins that assist in the late maturation steps of the functional core of the 30S ribosomal subunit. Associates with free 30S ribosomal subunits (but not with 30S subunits that are part of 70S ribosomes or polysomes). Required for efficient processing of 16S rRNA. May interact with the 5'-terminal helix region of 16S rRNA. The polypeptide is Ribosome-binding factor A (Pediococcus pentosaceus (strain ATCC 25745 / CCUG 21536 / LMG 10740 / 183-1w)).